The chain runs to 255 residues: Acetylglutamate kinase (255 aa).

Residues 40-41 (GG), Arg62, and Asn153 contribute to the substrate site.

It belongs to the acetylglutamate kinase family. ArgB subfamily.

Its subcellular location is the cytoplasm. It catalyses the reaction N-acetyl-L-glutamate + ATP = N-acetyl-L-glutamyl 5-phosphate + ADP. The protein operates within amino-acid biosynthesis; L-arginine biosynthesis; N(2)-acetyl-L-ornithine from L-glutamate: step 2/4. In terms of biological role, catalyzes the ATP-dependent phosphorylation of N-acetyl-L-glutamate. In Bacillus cereus (strain G9842), this protein is Acetylglutamate kinase.